The primary structure comprises 540 residues: NADH-quinone oxidoreductase subunit N 1 (540 aa).

13 consecutive transmembrane segments (helical) span residues 11–31 (ILPE…DVLT), 52–72 (AVGL…LFTV), 109–129 (FTMI…LLAM), 142–162 (ALLI…EFIL), 195–215 (FLFG…TYGF), 250–270 (LILG…VVPF), 284–306 (PVTA…RLLT), 324–344 (WTSI…LAAL), 352–372 (LLAY…LLWA), 386–406 (LIYY…VLAV), 431–451 (LMMT…GFWA), 464–486 (AVPL…LRFL), and 508–528 (AAII…NLIW).

It belongs to the complex I subunit 2 family. As to quaternary structure, NDH-1 is composed of 14 different subunits. Subunits NuoA, H, J, K, L, M, N constitute the membrane sector of the complex.

It is found in the cell membrane. It carries out the reaction a quinone + NADH + 5 H(+)(in) = a quinol + NAD(+) + 4 H(+)(out). Its function is as follows. NDH-1 shuttles electrons from NADH, via FMN and iron-sulfur (Fe-S) centers, to quinones in the respiratory chain. The immediate electron acceptor for the enzyme in this species is believed to be ubiquinone. Couples the redox reaction to proton translocation (for every two electrons transferred, four hydrogen ions are translocated across the cytoplasmic membrane), and thus conserves the redox energy in a proton gradient. This is NADH-quinone oxidoreductase subunit N 1 from Roseiflexus castenholzii (strain DSM 13941 / HLO8).